The primary structure comprises 118 residues: Ribonuclease P protein component (118 aa).

Belongs to the RnpA family. Consists of a catalytic RNA component (M1 or rnpB) and a protein subunit.

It catalyses the reaction Endonucleolytic cleavage of RNA, removing 5'-extranucleotides from tRNA precursor.. In terms of biological role, RNaseP catalyzes the removal of the 5'-leader sequence from pre-tRNA to produce the mature 5'-terminus. It can also cleave other RNA substrates such as 4.5S RNA. The protein component plays an auxiliary but essential role in vivo by binding to the 5'-leader sequence and broadening the substrate specificity of the ribozyme. The sequence is that of Ribonuclease P protein component from Vibrio cholerae serotype O1 (strain ATCC 39541 / Classical Ogawa 395 / O395).